The primary structure comprises 236 residues: 2-C-methyl-D-erythritol 4-phosphate cytidylyltransferase (236 aa).

It belongs to the IspD/TarI cytidylyltransferase family. IspD subfamily.

It catalyses the reaction 2-C-methyl-D-erythritol 4-phosphate + CTP + H(+) = 4-CDP-2-C-methyl-D-erythritol + diphosphate. Its pathway is isoprenoid biosynthesis; isopentenyl diphosphate biosynthesis via DXP pathway; isopentenyl diphosphate from 1-deoxy-D-xylulose 5-phosphate: step 2/6. Its function is as follows. Catalyzes the formation of 4-diphosphocytidyl-2-C-methyl-D-erythritol from CTP and 2-C-methyl-D-erythritol 4-phosphate (MEP). In Burkholderia thailandensis (strain ATCC 700388 / DSM 13276 / CCUG 48851 / CIP 106301 / E264), this protein is 2-C-methyl-D-erythritol 4-phosphate cytidylyltransferase.